A 1029-amino-acid chain; its full sequence is Myosin phosphatase Rho-interacting protein (1029 aa).

The segment at M1–T387 is interaction with F-actin. Positions K43–R150 constitute a PH 1 domain. The interval N152–V267 is disordered. The span at S179–S195 shows a compositional bias: low complexity. S198, S224, S226, S230, and S232 each carry phosphoserine. The segment covering S226–P237 has biased composition (low complexity). A compositionally biased stretch (basic and acidic residues) spans T245–V267. Phosphoserine is present on residues S271, S275, S294, and S297. Disordered stretches follow at residues A279–S306 and P333–E383. T300 carries the post-translational modification Phosphothreonine. A compositionally biased stretch (basic and acidic residues) spans R338–A354. Residue S369 is modified to Phosphoserine. In terms of domain architecture, PH 2 spans L391–L487. The segment at S490–A614 is disordered. The span at P492–D509 shows a compositional bias: polar residues. The residue at position 497 (S497) is a Phosphoserine. Residues P527–E550 are compositionally biased toward basic and acidic residues. The interaction with RHOA stretch occupies residues E550 to S828. The segment covering R562–S571 has biased composition (polar residues). The segment covering E583–R592 has biased composition (basic and acidic residues). A Phosphoserine modification is found at S622. The residue at position 650 (T650) is a Phosphothreonine. The stretch at S675 to E979 forms a coiled coil. S804 is subject to Phosphoserine. The segment at S828–L883 is interaction with PPP1R12A. Phosphoserine is present on residues S981, S997, S1018, and S1020.

As to quaternary structure, binds RHOA, PPP1R12A/MBS and PPP1R12C/MBS85 through adjacent coiled coil domains. Interacts with MYZAP. Binds F-actin through its N-terminus.

Its subcellular location is the cytoplasm. The protein localises to the cytoskeleton. Functionally, targets myosin phosphatase to the actin cytoskeleton. Required for the regulation of the actin cytoskeleton by RhoA and ROCK1. Depletion leads to an increased number of stress fibers in smooth muscle cells through stabilization of actin fibers by phosphorylated myosin. Overexpression of MRIP as well as its F-actin-binding region leads to disassembly of stress fibers in neuronal cells. The protein is Myosin phosphatase Rho-interacting protein (Mprip) of Rattus norvegicus (Rat).